Here is a 406-residue protein sequence, read N- to C-terminus: MLINFEKVLSLALLAGSVSGRKHVPRGFVTTSGMKFQLDGKDFYFAGSNAYYFPFNDNQTDVELGLAAAKQAGLTVFRTWGFNDKNATYIEGGLPAYGGEGAGTTEVVFQRWANGTSTIDLEPFDKVVNAAKNTGMKLVVALTNNWADYGGMDVYTINLGGQYHDDFYRLPAIKKAYKRYVKEMVTRYRDSPAIMAWELANEPRCGADGVRNLPRSADGCNPEVLTAWIDEMSTYIKKLDPHHLVTWGGEGGFNIESDDWAYNGADGGDFDNELALPNIDFGVFHSYPDWWSKTVSWTNQWIRDHAAAMRTGRKPVVHEEYGWLTPEARLEYLGTVSNITRLEAVGGWQQISVSEKMSDMYWQYGYSGYSYGRNHNDGFTIYLDDPEAKELVYKHAKEVKKLNRRH.

The signal sequence occupies residues 1-20 (MLINFEKVLSLALLAGSVSG). Asn58 carries N-linked (GlcNAc...) asparagine glycosylation. Substrate is bound at residue Trp80. N-linked (GlcNAc...) asparagine glycosylation is found at Asn86 and Asn114. A substrate-binding site is contributed by Asn201. Glu202 functions as the Proton donor in the catalytic mechanism. Tyr287 provides a ligand contact to substrate. The active-site Nucleophile is Glu320. The N-linked (GlcNAc...) asparagine glycan is linked to Asn338. Trp362 is a substrate binding site.

This sequence belongs to the glycosyl hydrolase 5 (cellulase A) family.

The protein localises to the secreted. The enzyme catalyses Random hydrolysis of (1-&gt;4)-beta-D-mannosidic linkages in mannans, galactomannans and glucomannans.. Functionally, endo-1,4-mannanase, a crucial enzyme for depolymerization of seed galactomannans and wood galactoglucomannans. The polypeptide is Probable mannan endo-1,4-beta-mannosidase C (manC) (Aspergillus terreus (strain NIH 2624 / FGSC A1156)).